We begin with the raw amino-acid sequence, 80 residues long: Cell division activator CedA (80 aa).

It belongs to the CedA family.

Its function is as follows. Activates the cell division inhibited by chromosomal DNA over-replication. This chain is Cell division activator CedA, found in Citrobacter koseri (strain ATCC BAA-895 / CDC 4225-83 / SGSC4696).